Here is a 271-residue protein sequence, read N- to C-terminus: Virulence regulon transcriptional activator VirF (271 aa).

The region spanning 167–265 (ERLQKFMEEN…GCTPSQARLT (99 aa)) is the HTH araC/xylS-type domain. 2 DNA-binding regions (H-T-H motif) span residues 184-205 (SKFAREFGMGLTTFKELFGTVY) and 232-255 (IVDIAMEAGFSSQSYFTQSYRRRF).

Transcriptional activator of the Yersinia virulence regulon. The polypeptide is Virulence regulon transcriptional activator VirF (virF) (Yersinia enterocolitica).